The sequence spans 66 residues: Large ribosomal subunit protein bL33c (66 aa).

Component of the chloroplast large ribosomal subunit (LSU). Mature 70S chloroplast ribosomes of higher plants consist of a small (30S) and a large (50S) subunit. The 30S small subunit contains 1 molecule of ribosomal RNA (16S rRNA) and 24 different proteins. The 50S large subunit contains 3 rRNA molecules (23S, 5S and 4.5S rRNA) and 33 different proteins.

The protein resides in the plastid. It localises to the chloroplast. Its function is as follows. Component of the chloroplast ribosome (chloro-ribosome), a dedicated translation machinery responsible for the synthesis of chloroplast genome-encoded proteins, including proteins of the transcription and translation machinery and components of the photosynthetic apparatus. This Spinacia oleracea (Spinach) protein is Large ribosomal subunit protein bL33c (rpl33).